Consider the following 200-residue polypeptide: dITP/XTP pyrophosphatase (200 aa).

7 to 12 (TSNKHK) contributes to the substrate binding site. Residues Glu38 and Asp73 each coordinate Mg(2+). Asp73 functions as the Proton acceptor in the catalytic mechanism. Residues Ser74, 154 to 157 (FGYD), Lys177, and 182 to 183 (HR) each bind substrate.

This sequence belongs to the HAM1 NTPase family. In terms of assembly, homodimer. Requires Mg(2+) as cofactor.

The enzyme catalyses XTP + H2O = XMP + diphosphate + H(+). It catalyses the reaction dITP + H2O = dIMP + diphosphate + H(+). It carries out the reaction ITP + H2O = IMP + diphosphate + H(+). Its function is as follows. Pyrophosphatase that catalyzes the hydrolysis of nucleoside triphosphates to their monophosphate derivatives, with a high preference for the non-canonical purine nucleotides XTP (xanthosine triphosphate), dITP (deoxyinosine triphosphate) and ITP. Seems to function as a house-cleaning enzyme that removes non-canonical purine nucleotides from the nucleotide pool, thus preventing their incorporation into DNA/RNA and avoiding chromosomal lesions. The protein is dITP/XTP pyrophosphatase of Campylobacter jejuni subsp. jejuni serotype O:2 (strain ATCC 700819 / NCTC 11168).